We begin with the raw amino-acid sequence, 145 residues long: D-aminoacyl-tRNA deacylase (145 aa).

Residues Gly137–Pro138 carry the Gly-cisPro motif, important for rejection of L-amino acids motif.

This sequence belongs to the DTD family. As to quaternary structure, homodimer.

The protein localises to the cytoplasm. It catalyses the reaction glycyl-tRNA(Ala) + H2O = tRNA(Ala) + glycine + H(+). The catalysed reaction is a D-aminoacyl-tRNA + H2O = a tRNA + a D-alpha-amino acid + H(+). Functionally, an aminoacyl-tRNA editing enzyme that deacylates mischarged D-aminoacyl-tRNAs. Also deacylates mischarged glycyl-tRNA(Ala), protecting cells against glycine mischarging by AlaRS. Acts via tRNA-based rather than protein-based catalysis; rejects L-amino acids rather than detecting D-amino acids in the active site. By recycling D-aminoacyl-tRNA to D-amino acids and free tRNA molecules, this enzyme counteracts the toxicity associated with the formation of D-aminoacyl-tRNA entities in vivo and helps enforce protein L-homochirality. In Pectobacterium carotovorum subsp. carotovorum (strain PC1), this protein is D-aminoacyl-tRNA deacylase.